The following is a 275-amino-acid chain: Monooxygenase af470 (275 aa).

It catalyses the reaction prefumagillin + NADPH + 2 O2 = fumagillin + acetaldehyde + NADP(+) + H2O. Its pathway is secondary metabolite biosynthesis; terpenoid biosynthesis. In terms of biological role, monooxygenase; part of the gene cluster that mediates the biosynthesis of fumagillin, a meroterpenoid that has numerous biological activities including irreversible inhibition of human type 2 methionine aminopeptidase (METAP2). Within the pathway, the monooxygenase af470 catalyzes the oxidative cleavage of prefumagillin to yield the final compound of the pathway, fumagillin. The pathway begins with the conversion of farnesyl pyrophosphate (FPP) to beta-trans-bergamotene by the membrane-bound beta-trans-bergamotene synthase af520. The multifunctional cytochrome P450 monooxygenase af510 then converts beta-trans-bergamotene into 5-keto-demethoxyfumagillol via several oxydation steps. 5-keto-demethoxyfumagillol is then subjected to successive C-6 hydroxylation and O-methylation by the dioxygenase af480 and O-methyltransferase af390-400, respectively, to yield 5-keto-fumagillol, which is then stereoselectively reduced by the keto-reductase af490 to 5R-hydroxy-seco-sesquiterpene. The next step is the polyketide transferase af380-catalyzed transfer of a dodecapentaenoyl group synthesized by the polyketide synthase af370 onto 5R-hydroxy-seco-sesquiterpene which leads to the production of prefumagillin. Finally, oxidative cleavage by the monooxygenase af470 converts prefumagillin to fumagillin. The polypeptide is Monooxygenase af470 (Aspergillus fumigatus (strain ATCC MYA-4609 / CBS 101355 / FGSC A1100 / Af293) (Neosartorya fumigata)).